We begin with the raw amino-acid sequence, 1639 residues long: MAKDSPSPLGASPKKPGCSSPAAAVLENQRRELEKLRAELEAERAGWRAERRRFAARERQLREEAERERRQLADRLRSKWEAQRSRELRQLQEEMQREREAEIRQLLRWKEAEQRQLQQLLHRERDGVVRQARELQRQLAEELVNRGHCSRPGASEVSAAQCRCRLQEVLAQLRWQTDGEQAARIRYLQAALEVERQLFLKYILAHFRGHPALSGSPDPQAVHSLEEPLPQTSSGSCHAPKPACQLGSLDSLSAEVGVRSRSLGLVSSACSSSPDGLLSTHASSLDCFAPACSRSLDSTRSLPKASKSEERPSSPDTSTPGSRRLSPPPSPLPPPPPPSAHRKLSNPRGGEGSESQPCEVLTPSPPGLGHHELIKLNWLLAKALWVLARRCYTLQEENKQLRRAGCPYQADEKVKRLKVKRAELTGLARRLADRARELQETNLRAVSAPIPGESCAGLELCQVFARQRARDLSEQASAPLAKDKQIEELRQECHLLQARVASGPCSDLHTGRGGPCTQWLNVRDLDRLQRESQREVLRLQRQLMLQQGNGGAWPEAGGQSATCEEVRRQMLALERELDQRRRECQELGTQAAPARRRGEEAETQLQAALLKNAWLAEENGRLQAKTDWVRKVEAENSEVRGHLGRACQERDASGLIAEQLLQQAARGQDRQQQLQRDPQKALCDLHPSWKEIQALQCRPGHPPEQPWETSQMPESQVKGSRRPKFHARPEDYAVSQPNRDIQEKREASLEESPVALGESASVPQVSETVPASQPLSKKTSSQSNSSSEGSMWATVPSSPTLDRDTASEVDDLEPDSVSLALEMGGSAAPAAPKLKIFMAQYNYNPFEGPNDHPEGELPLTAGDYIYIFGDMDEDGFYEGELDDGRRGLVPSNFVEQIPDSYIPGCLPAKSPDLGPSQLPAGQDEALEEDSLLSGKAQGMVDRGLCQMVRVGSKTEVATEILDTKTEACQLGLLQSMGKQGLSRPLLGTKGVLRMAPMQLHLQNVTATSANITWVYSSHRHPHVVYLDDREHALTPAGVSCYTFQGLCPGTHYRVRVEVRLPWDLLQVYWGTMSSTVTFDTLLAGPPYPPLEVLVERHASPGVLVVSWLPVTIDSAGSSNGVQVTGYAVYADGLKVCEVADATAGSTVLEFSQLQVPLTWQKVSVRTMSLCGESLDSVPAQIPEDFFMCHRWPETPPFSYTCGDPSTYRVTFPVCPQKLSLAPPSAKASPHNPGSCGEPQAKFLEAFFEEPPRRQSPVSNLGSEGECPSSGAGSQAQELAEAWEGCRKDLLFQKSPQNHRPPSVSDQPGEKENCYQHMGTSKSPAPGFIHLRTECGPRKEPCQEKAALERVLRQKQDAQGFTPPQLGASQQYASDFHNVLKEEQEALCLDLRGTERREERREPEPHSRQGQALGVKRGCQLHEPSSALCPAPSAKVIKMPRGGPQQLGTGANTPARVFVALSDYNPLVMSANLKAAEEELVFQKRQLLRVWGSQDTHDFYLSECNRQVGNIPGRLVAEMEVGTEQTDRRWRSPAQGHLPSVAHLEDFQGLTIPQGSSLVLQGNSKRLPLWTPKIMIAALDYDPGDGQMGGQGKGRLALRAGDVVMVYGPMDDQGFYYGELGGHRGLVPAHLLDHMSLHGH.

Disordered stretches follow at residues 1–22, 215–240, and 295–364; these read MAKDSPSPLGASPKKPGCSSPA, GSPDPQAVHSLEEPLPQTSSGSCHAP, and SLDS…LTPS. The stretch at 21-143 forms a coiled coil; that stretch reads PAAAVLENQR…ELQRQLAEEL (123 aa). A compositionally biased stretch (pro residues) spans 326 to 339; sequence SPPPSPLPPPPPPS. 2 coiled-coil regions span residues 409–442 and 480–619; these read QADEKVKRLKVKRAELTGLARRLADRARELQETN and LAKD…AEEN. Positions 697-811 are disordered; the sequence is CRPGHPPEQP…DRDTASEVDD (115 aa). Polar residues-rich tracts occupy residues 707-718 and 761-775; these read WETSQMPESQVK and SVPQVSETVPASQPL. Positions 776-790 are enriched in low complexity; the sequence is SKKTSSQSNSSSEGS. An SH3 1 domain is found at 832–899; it reads PKLKIFMAQY…PSNFVEQIPD (68 aa). 2 consecutive Fibronectin type-III domains span residues 995–1083 and 1088–1184; these read APMQ…TLLA and PPLE…IPED. 3 disordered regions span residues 1251–1273, 1292–1325, and 1392–1413; these read PRRQSPVSNLGSEGECPSSGAGS, QKSPQNHRPPSVSDQPGEKENCYQHMGTSKSPAP, and GTERREERREPEPHSRQGQALG. Residues 1293-1305 are compositionally biased toward polar residues; that stretch reads KSPQNHRPPSVSD. The segment covering 1392–1406 has biased composition (basic and acidic residues); sequence GTERREERREPEPHS. SH3 domains are found at residues 1452–1520 and 1569–1636; these read TPAR…EMEV and WTPK…HMSL.

It belongs to the RIMBP family. As to quaternary structure, interacts with LRGUK (via guanylate kinase-like domain). Interacts (via C-terminus) with HOOK1 (via coiled-coil region).

The protein localises to the cytoplasm. It localises to the cytoskeleton. In terms of biological role, probable component of the manchette, a microtubule-based structure which plays a key role in sperm head morphogenesis during late stages of sperm development. In Homo sapiens (Human), this protein is RIMS-binding protein 3B (RIMBP3B).